The sequence spans 340 residues: MGAGSWALTLFGFSAFRVPGQPRSTWLGVAALGLAAVALGTVAWRRARPRRRRRLQQVGTVAQLWIYPIKSCKGLSVSEAECTAMGLRYGHLRDRFWLVINEEGNMVTARQEPRLVLISLTCEDDTLTLSAAYTKDLLLPITPPATNPLLQCRVHGLEIQGRDCGEDAAQWVSSFLKMQSCRLVHFEPHMRPRSSRQMKAVFRTKDQVAYSDASPFLVLSEASLEDLNSRLERRVKATNFRPNIVISGCGVYAEDSWNEVLIGDVELKRVMACTRCLLTTVDPDTGISDRKEPLETLKSYRLCDPSEQALYGKLPIFGQYFALENPGTIRVGDPVYLLGQ.

G2 is lipidated: N-myristoyl glycine. Residues 2–24 (GAGSWALTLFGFSAFRVPGQPRS) are Mitochondrial matrix-facing. Residues 25–44 (TWLGVAALGLAAVALGTVAW) traverse the membrane as a helical; Signal-anchor for type II membrane protein segment. The Cytoplasmic portion of the chain corresponds to 45–340 (RRARPRRRRR…VGDPVYLLGQ (296 aa)). Mo-molybdopterin is bound by residues K70, S71, and R95. Residues 96–186 (FWLVINEEGN…KMQSCRLVHF (91 aa)) are MOSC N-terminal region. One can recognise an MOSC domain in the interval 191-338 (RPRSSRQMKA…IRVGDPVYLL (148 aa)). Mo-molybdopterin contacts are provided by S214, R241, N243, T274, R275, C276, and Y320.

In terms of assembly, component of a complex composed of cytochrome b5, NADH-cytochrome b5 reductase and MTARC1. It depends on Mo-molybdopterin as a cofactor.

It is found in the mitochondrion outer membrane. The protein localises to the membrane. The enzyme catalyses N(omega)-hydroxy-L-arginine + 2 Fe(II)-[cytochrome b5] + 2 H(+) = L-arginine + 2 Fe(III)-[cytochrome b5] + H2O. Catalyzes the reduction of N-oxygenated molecules, acting as a counterpart of cytochrome P450 and flavin-containing monooxygenases in metabolic cycles. As a component of prodrug-converting system, reduces a multitude of N-hydroxylated prodrugs particularly amidoximes, leading to increased drug bioavailability. May be involved in mitochondrial N(omega)-hydroxy-L-arginine (NOHA) reduction, regulating endogenous nitric oxide levels and biosynthesis. Postulated to cleave the N-OH bond of N-hydroxylated substrates in concert with electron transfer from NADH to cytochrome b5 reductase then to cytochrome b5, the ultimate electron donor that primes the active site for substrate reduction. The polypeptide is Mitochondrial amidoxime-reducing component 1 (Mtarc1) (Mus musculus (Mouse)).